Here is a 273-residue protein sequence, read N- to C-terminus: Ribonuclease PH (273 aa).

Residues Arg86 and 124 to 126 contribute to the phosphate site; that span reads GTR. Residues 254 to 273 form a disordered region; sequence GHQEPGEGAGVSLAPGGGGL.

This sequence belongs to the RNase PH family. As to quaternary structure, homohexameric ring arranged as a trimer of dimers.

The enzyme catalyses tRNA(n+1) + phosphate = tRNA(n) + a ribonucleoside 5'-diphosphate. Its function is as follows. Phosphorolytic 3'-5' exoribonuclease that plays an important role in tRNA 3'-end maturation. Removes nucleotide residues following the 3'-CCA terminus of tRNAs; can also add nucleotides to the ends of RNA molecules by using nucleoside diphosphates as substrates, but this may not be physiologically important. Probably plays a role in initiation of 16S rRNA degradation (leading to ribosome degradation) during starvation. This chain is Ribonuclease PH, found in Symbiobacterium thermophilum (strain DSM 24528 / JCM 14929 / IAM 14863 / T).